Consider the following 248-residue polypeptide: UDP-2,3-diacylglucosamine hydrolase (248 aa).

Residues Asp7, His9, Asp40, Asn78, and His113 each coordinate Mn(2+). 78–79 (NR) is a substrate binding site. Residues Asp121, Ser159, Thr163, Lys166, and His194 each contribute to the substrate site. Mn(2+) is bound by residues His194 and His196.

Belongs to the LpxH family. Mn(2+) is required as a cofactor.

It localises to the cell inner membrane. It catalyses the reaction UDP-2-N,3-O-bis[(3R)-3-hydroxytetradecanoyl]-alpha-D-glucosamine + H2O = 2-N,3-O-bis[(3R)-3-hydroxytetradecanoyl]-alpha-D-glucosaminyl 1-phosphate + UMP + 2 H(+). It functions in the pathway glycolipid biosynthesis; lipid IV(A) biosynthesis; lipid IV(A) from (3R)-3-hydroxytetradecanoyl-[acyl-carrier-protein] and UDP-N-acetyl-alpha-D-glucosamine: step 4/6. Its function is as follows. Hydrolyzes the pyrophosphate bond of UDP-2,3-diacylglucosamine to yield 2,3-diacylglucosamine 1-phosphate (lipid X) and UMP by catalyzing the attack of water at the alpha-P atom. Involved in the biosynthesis of lipid A, a phosphorylated glycolipid that anchors the lipopolysaccharide to the outer membrane of the cell. The protein is UDP-2,3-diacylglucosamine hydrolase of Pseudomonas syringae pv. syringae (strain B728a).